Reading from the N-terminus, the 361-residue chain is Ribosomal RNA large subunit methyltransferase M (361 aa).

S-adenosyl-L-methionine contacts are provided by residues Ser187, 220–223 (CPGG), Asp239, Asp259, and Asp276. Lys305 (proton acceptor) is an active-site residue.

This sequence belongs to the class I-like SAM-binding methyltransferase superfamily. RNA methyltransferase RlmE family. RlmM subfamily. In terms of assembly, monomer.

The protein localises to the cytoplasm. The enzyme catalyses cytidine(2498) in 23S rRNA + S-adenosyl-L-methionine = 2'-O-methylcytidine(2498) in 23S rRNA + S-adenosyl-L-homocysteine + H(+). In terms of biological role, catalyzes the 2'-O-methylation at nucleotide C2498 in 23S rRNA. The protein is Ribosomal RNA large subunit methyltransferase M of Shewanella oneidensis (strain ATCC 700550 / JCM 31522 / CIP 106686 / LMG 19005 / NCIMB 14063 / MR-1).